The chain runs to 382 residues: 1-deoxy-D-xylulose 5-phosphate reductoisomerase (382 aa).

Residues Thr10, Gly11, Ser12, Ile13, Gly36, and Asn122 each contribute to the NADPH site. Lys123 lines the 1-deoxy-D-xylulose 5-phosphate pocket. Glu124 provides a ligand contact to NADPH. Asp148 is a Mn(2+) binding site. 4 residues coordinate 1-deoxy-D-xylulose 5-phosphate: Ser149, Glu150, Ser174, and His197. Glu150 provides a ligand contact to Mn(2+). Gly203 is a binding site for NADPH. The 1-deoxy-D-xylulose 5-phosphate site is built by Ser210, Asn215, Lys216, and Glu219. Glu219 is a Mn(2+) binding site.

The protein belongs to the DXR family. It depends on Mg(2+) as a cofactor. The cofactor is Mn(2+).

It carries out the reaction 2-C-methyl-D-erythritol 4-phosphate + NADP(+) = 1-deoxy-D-xylulose 5-phosphate + NADPH + H(+). It functions in the pathway isoprenoid biosynthesis; isopentenyl diphosphate biosynthesis via DXP pathway; isopentenyl diphosphate from 1-deoxy-D-xylulose 5-phosphate: step 1/6. Functionally, catalyzes the NADPH-dependent rearrangement and reduction of 1-deoxy-D-xylulose-5-phosphate (DXP) to 2-C-methyl-D-erythritol 4-phosphate (MEP). This chain is 1-deoxy-D-xylulose 5-phosphate reductoisomerase, found in Pelodictyon phaeoclathratiforme (strain DSM 5477 / BU-1).